The following is a 242-amino-acid chain: Small ribosomal subunit protein uS3 (242 aa).

The 72-residue stretch at 39-110 folds into the KH type-2 domain; the sequence is IRRFIHKKYG…QVRINVVEVE (72 aa). The tract at residues 216–242 is disordered; that stretch reads QSMPVGASPRRRGNRRPQQFEDRSNEG. Positions 233 to 242 are enriched in basic and acidic residues; it reads QQFEDRSNEG.

This sequence belongs to the universal ribosomal protein uS3 family. As to quaternary structure, part of the 30S ribosomal subunit. Forms a tight complex with proteins S10 and S14.

Functionally, binds the lower part of the 30S subunit head. Binds mRNA in the 70S ribosome, positioning it for translation. The chain is Small ribosomal subunit protein uS3 from Prochlorococcus marinus (strain MIT 9303).